A 212-amino-acid polypeptide reads, in one-letter code: Peroxisomal membrane protein 4 (212 aa).

N57 carries N-linked (GlcNAc...) asparagine glycosylation. A run of 2 helical transmembrane segments spans residues 97–117 and 153–173; these read GKTY…LVFG and WDPF…LFEY. N206 carries an N-linked (GlcNAc...) asparagine glycan.

This sequence belongs to the peroxisomal membrane protein PXMP2/4 family. In terms of assembly, interacts with PEX19. Expressed in normal prostate epithelial cells, and androgen-sensitive prostate adenocarcinoma cells. Not expressed in androgen-insensitive prostate adenocarcinoma cells.

It is found in the peroxisome membrane. This is Peroxisomal membrane protein 4 (PXMP4) from Homo sapiens (Human).